A 210-amino-acid chain; its full sequence is N-(5'-phosphoribosyl)anthranilate isomerase (210 aa).

The protein belongs to the TrpF family.

The enzyme catalyses N-(5-phospho-beta-D-ribosyl)anthranilate = 1-(2-carboxyphenylamino)-1-deoxy-D-ribulose 5-phosphate. It participates in amino-acid biosynthesis; L-tryptophan biosynthesis; L-tryptophan from chorismate: step 3/5. The polypeptide is N-(5'-phosphoribosyl)anthranilate isomerase (Nostoc punctiforme (strain ATCC 29133 / PCC 73102)).